The following is an 89-amino-acid chain: Elongation factor 1-beta (89 aa).

This sequence belongs to the EF-1-beta/EF-1-delta family.

Promotes the exchange of GDP for GTP in EF-1-alpha/GDP, thus allowing the regeneration of EF-1-alpha/GTP that could then be used to form the ternary complex EF-1-alpha/GTP/AAtRNA. The protein is Elongation factor 1-beta of Methanococcoides burtonii (strain DSM 6242 / NBRC 107633 / OCM 468 / ACE-M).